Reading from the N-terminus, the 221-residue chain is Mitochondrial cardiolipin hydrolase (221 aa).

The Mitochondrial intermembrane segment spans residues 1–4 (MGRS). The segment at 1 to 38 (MGRSSWRLVFAAGAGLALALEALPWLMRWLLAGRRPRR) is required for mitochondrial localization. A helical transmembrane segment spans residues 5 to 27 (SWRLVFAAGAGLALALEALPWLM). Residues 28–221 (RWLLAGRRPR…SFFPQKHRGH (194 aa)) are Cytoplasmic-facing. The segment at 44 to 75 (PSQVTCTEALLQAPGLPPGPSGCPCSLPHSES) adopts a C3H1-type; atypical zinc-finger fold. The 28-residue stretch at 148-175 (DLGYMHHKFAIVDKKVLITGSLNWTTQA) folds into the PLD phosphodiesterase domain. Catalysis depends on residues His153, Lys155, and Asp160.

Belongs to the phospholipase D family. MitoPLD/Zucchini subfamily. Homodimer. Interacts with MOV10L1. Interacts with MIGA1 and MIGA2; possibly facilitating homodimer formation. Interacts with GK2. Predominantly expressed in testis (at protein level) and in growing ovary. Also expressed in the brain, eye and urinary bladder (at protein level), but its levels were low or undetectable in other organs.

It localises to the mitochondrion outer membrane. The protein resides in the nucleus membrane. The protein localises to the cell membrane. It is found in the golgi apparatus. The catalysed reaction is a cardiolipin + H2O = a 1,2-diacyl-sn-glycero-3-phospho-(1'-sn-glycerol) + a 1,2-diacyl-sn-glycero-3-phosphate + H(+). Its activity is regulated as follows. Single stranded DNA (ssDNA) hydrolase activity does not depend upon, but is stimulated by the presence of Ca(2+) and Mn(2+). MIGA1 and MIGA2 increase PLD6 self-association affinity and affects the homodimer conformation facilitating its phospholipase activity over the nuclease activity. MYC induces its expression and stimulates its phospholipase activity. In terms of biological role, presents phospholipase and nuclease activities, depending on the different physiological conditions. Interaction with Mitoguardin (MIGA1 or MIGA2) affects the dimer conformation, facilitating the lipase activity over the nuclease activity. Plays a key role in mitochondrial fusion and fission via its phospholipase activity. In its phospholipase role, it uses the mitochondrial lipid cardiolipin as substrate to generate phosphatidate (PA or 1,2-diacyl-sn-glycero-3-phosphate), a second messenger signaling lipid. Production of PA facilitates Mitofusin-mediated fusion, whereas the cleavage of PA by the Lipin family of phosphatases produces diacylgycerol (DAG) which promotes mitochondrial fission. Both Lipin and DAG regulate mitochondrial dynamics and membrane fusion/fission, important processes for adapting mitochondrial metabolism to changes in cell physiology. Mitochondrial fusion enables cells to cope with the increased nucleotide demand during DNA synthesis. Mitochondrial function and dynamics are closely associated with biological processes such as cell growth, proliferation, and differentiation. Mediator of MYC activity, promotes mitochondrial fusion and activates AMPK which in turn inhibits YAP/TAZ, thereby inducing cell growth and proliferation. The endonuclease activity plays a critical role in PIWI-interacting RNA (piRNA) biogenesis during spermatogenesis. Implicated in spermatogenesis and sperm fertility in testicular germ cells, its single strand-specific nuclease activity is critical for the biogenesis/maturation of PIWI-interacting RNA (piRNA). MOV10L1 selectively binds to piRNA precursors and funnels them to the endonuclease that catalyzes the first cleavage step of piRNA processing to generate piRNA intermediate fragments that are subsequently loaded to Piwi proteins. Cleaves either DNA or RNA substrates with similar affinity, producing a 5' phosphate end, in this way it participates in the processing of primary piRNA transcripts. piRNAs provide essential protection against the activity of mobile genetic elements. piRNA-mediated transposon silencing is thus critical for maintaining genome stability, in particular in germline cells when transposons are mobilized as a consequence of wide-spread genomic demethylation. PA may act as signaling molecule in the recognition/transport of the precursor RNAs of primary piRNAs. Interacts with tesmin in testes, suggesting a role in spermatogenesis via association with its interacting partner. The chain is Mitochondrial cardiolipin hydrolase (Pld6) from Mus musculus (Mouse).